The sequence spans 190 residues: Threonylcarbamoyl-AMP synthase (190 aa).

The YrdC-like domain occupies 7–190; it reads GDAIAAAIDV…ALTGELFRQG (184 aa).

This sequence belongs to the SUA5 family. TsaC subfamily.

Its subcellular location is the cytoplasm. The enzyme catalyses L-threonine + hydrogencarbonate + ATP = L-threonylcarbamoyladenylate + diphosphate + H2O. Its function is as follows. Required for the formation of a threonylcarbamoyl group on adenosine at position 37 (t(6)A37) in tRNAs that read codons beginning with adenine. Catalyzes the conversion of L-threonine, HCO(3)(-)/CO(2) and ATP to give threonylcarbamoyl-AMP (TC-AMP) as the acyladenylate intermediate, with the release of diphosphate. This chain is Threonylcarbamoyl-AMP synthase, found in Shigella boydii serotype 4 (strain Sb227).